The following is a 184-amino-acid chain: dCTP deaminase (184 aa).

DCTP is bound by residues 107–112 (KSTYAR), 131–133 (TLE), Gln152, Tyr166, and Gln176. Glu133 (proton donor/acceptor) is an active-site residue.

This sequence belongs to the dCTP deaminase family. As to quaternary structure, homotrimer.

It carries out the reaction dCTP + H2O + H(+) = dUTP + NH4(+). It participates in pyrimidine metabolism; dUMP biosynthesis; dUMP from dCTP (dUTP route): step 1/2. In terms of biological role, catalyzes the deamination of dCTP to dUTP. The chain is dCTP deaminase from Rhodospirillum centenum (strain ATCC 51521 / SW).